A 298-amino-acid polypeptide reads, in one-letter code: ADP/ATP translocase 2 (298 aa).

The residue at position 1 (Met1) is an N-acetylmethionine. Over Met1–Ser7 the chain is Mitochondrial intermembrane. Position 2 is an N-acetylthreonine; in ADP/ATP translocase 2, N-terminally processed (Thr2). The Solcar 1 repeat unit spans residues Val6 to Ile98. Ser7 is subject to Phosphoserine. Residues Phe8 to Gln37 traverse the membrane as a helical segment. Lys23 is modified (N6-malonyllysine). Topologically, residues Val38–Asn74 are mitochondrial matrix. Lys43 is modified (N6-succinyllysine). The residue at position 52 (Lys52) is an N6,N6,N6-trimethyllysine; alternate. Residue Lys52 is modified to N6,N6-dimethyllysine; alternate. Lys52 bears the N6-methyllysine; alternate mark. Residues Leu75 to Phe99 form a helical membrane-spanning segment. ADP is bound by residues Arg80 and Lys92. N6-malonyllysine occurs at positions 92 and 96. Residues Leu100–Phe109 are Mitochondrial intermembrane-facing. The residue at position 105 (Lys105) is an N6-acetyllysine; alternate. Lys105 is subject to N6-succinyllysine; alternate. A helical transmembrane segment spans residues Trp110–Phe130. 2 Solcar repeats span residues Arg111–Met201 and Ile212–Phe297. The Mitochondrial matrix segment spans residues Val131–Asn178. Lys147 bears the N6-methyllysine; alternate mark. N6-acetyllysine; alternate is present on Lys147. An N6-succinyllysine; alternate modification is found at Lys147. An N6-malonyllysine; alternate modification is found at Lys147. Residues Lys163 and Lys166 each carry the N6-acetyllysine modification. The chain crosses the membrane as a helical span at residues Val179–Lys199. Over Gly200–Ile210 the chain is Mitochondrial intermembrane. The helical transmembrane segment at Phe211–Phe231 threads the bilayer. The Mitochondrial matrix segment spans residues Asp232–Gly273. Arg235 lines the ADP pocket. Residues Arg235 to Met240 form an important for transport activity region. Residues Arg235–Met240 carry the Nucleotide carrier signature motif motif. Lys268 carries the post-translational modification N6-acetyllysine; alternate. Residue Lys268 is modified to N6-succinyllysine; alternate. A helical membrane pass occupies residues Ala274–Tyr291. Topologically, residues Asp292–Thr298 are mitochondrial intermembrane.

This sequence belongs to the mitochondrial carrier (TC 2.A.29) family. Monomer. Component of the MMXD complex, which includes CIAO1, ERCC2, CIAO2B, MMS19 and SLC25A5/ANT2. Interacts with AK4. Interacts with TIMM44; leading to inhibit the presequence translocase TIMM23, thereby promoting stabilization of PINK1. Post-translationally, trimethylated by ANTKMT at Lys-52.

The protein resides in the mitochondrion inner membrane. It is found in the membrane. It catalyses the reaction ADP(in) + ATP(out) = ADP(out) + ATP(in). The enzyme catalyses H(+)(in) = H(+)(out). The matrix-open state (m-state) is inhibited by the membrane-permeable bongkrekic acid (BKA). The cytoplasmic-open state (c-state) is inhibited by the membrane-impermeable toxic inhibitor carboxyatractyloside (CATR). Proton transporter activity is inhibited by ADP:ATP antiporter activity. In terms of biological role, ADP:ATP antiporter that mediates import of ADP into the mitochondrial matrix for ATP synthesis, and export of ATP out to fuel the cell. Cycles between the cytoplasmic-open state (c-state) and the matrix-open state (m-state): operates by the alternating access mechanism with a single substrate-binding site intermittently exposed to either the cytosolic (c-state) or matrix (m-state) side of the inner mitochondrial membrane. In addition to its ADP:ATP antiporter activity, also involved in mitochondrial uncoupling and mitochondrial permeability transition pore (mPTP) activity. Plays a role in mitochondrial uncoupling by acting as a proton transporter: proton transport uncouples the proton flows via the electron transport chain and ATP synthase to reduce the efficiency of ATP production and cause mitochondrial thermogenesis. Proton transporter activity is inhibited by ADP:ATP antiporter activity, suggesting that SLC25A5/ANT2 acts as a master regulator of mitochondrial energy output by maintaining a delicate balance between ATP production (ADP:ATP antiporter activity) and thermogenesis (proton transporter activity). Proton transporter activity requires free fatty acids as cofactor, but does not transport it. Probably mediates mitochondrial uncoupling in tissues that do not express UCP1. Also plays a key role in mPTP opening, a non-specific pore that enables free passage of the mitochondrial membranes to solutes of up to 1.5 kDa, and which contributes to cell death. It is however unclear if SLC25A5/ANT2 constitutes a pore-forming component of mPTP or regulates it. Acts as a regulator of mitophagy independently of ADP:ATP antiporter activity: promotes mitophagy via interaction with TIMM44, leading to inhibit the presequence translocase TIMM23, thereby promoting stabilization of PINK1. As part of the mitotic spindle-associated MMXD complex it may play a role in chromosome segregation. This chain is ADP/ATP translocase 2, found in Bos taurus (Bovine).